We begin with the raw amino-acid sequence, 185 residues long: Hypoxanthine/guanine phosphoribosyltransferase (185 aa).

The protein belongs to the purine/pyrimidine phosphoribosyltransferase family. Archaeal HPRT subfamily. As to quaternary structure, homodimer.

The protein resides in the cytoplasm. The catalysed reaction is IMP + diphosphate = hypoxanthine + 5-phospho-alpha-D-ribose 1-diphosphate. It catalyses the reaction GMP + diphosphate = guanine + 5-phospho-alpha-D-ribose 1-diphosphate. Its pathway is purine metabolism; IMP biosynthesis via salvage pathway; IMP from hypoxanthine: step 1/1. Functionally, catalyzes a salvage reaction resulting in the formation of IMP that is energically less costly than de novo synthesis. The protein is Hypoxanthine/guanine phosphoribosyltransferase (hpt) of Methanococcus maripaludis (strain DSM 14266 / JCM 13030 / NBRC 101832 / S2 / LL).